Here is a 208-residue protein sequence, read N- to C-terminus: Inducible T-cell costimulator (208 aa).

The first 19 residues, 1–19 (MKSDLWYFLLFCFQVEALT), serve as a signal peptide directing secretion. At 20-140 (GEINDSTKSE…YESQTCCQLK (121 aa)) the chain is on the extracellular side. Residue Asn23 is glycosylated (N-linked (GlcNAc...) asparagine). The Ig-like V-type domain maps to 30-132 (MFTFHDGGVQ…ISREYLNVYE (103 aa)). 2 disulfides stabilise this stretch: Cys42/Cys108 and Cys63/Cys82. A glycan (N-linked (GlcNAc...) asparagine) is linked at Asn122. A helical transmembrane segment spans residues 141–161 (FWLPIGCAAFVVVYIFGCIFL). Residues 162–208 (CWLTKKKYRSSVHDPNSEYMFMAAVNTAKKPGLTGVTHNLELCGTQA) lie on the Cytoplasmic side of the membrane.

As to quaternary structure, homodimer; disulfide-linked. Interacts with ICOSLG. Interacts with PIK3R1. Interacts with TBK1; this interaction is critical for the maturation of T follicular regulatory cells. N-glycosylated.

It is found in the cell membrane. Functionally, stimulatory receptor expressed in activated or antigen-experienced T-cells that plays an important role in the immune response. Upon binding to its ligand ICOSL expressed on antigen presenting cells (APCs), delivers costimulatory signals that enhances all basic T-cell responses to a foreign antigen, namely proliferation, secretion of lymphokines including IL10, up-regulation of molecules that mediate cell-cell interaction, and effective help for antibody secretion by B-cells. Also acts as a costimulatory receptor critical for the differentiation of T follicular regulatory cells upon immune challenges such as viral infection. Mechanistically, potentiates TCR-induced calcium flux by augmenting PLCG1 activation and actin remodeling. In addition, activates PI3K signaling pathways independently of calcium flux. Essential both for efficient interaction between T and B-cells and for normal antibody responses to T-cell dependent antigens. Prevents the apoptosis of pre-activated T-cells. Plays a critical role in CD40-mediated class switching of immunoglobin isotypes. The chain is Inducible T-cell costimulator (ICOS) from Canis lupus familiaris (Dog).